Consider the following 209-residue polypeptide: MTMIHVNPTRMELTSLKKRLVTAKRGHKLLKDKQDELVKKFLDMVKQNRALREEVEAELIGAFKSFTMARSQMSANVVEESLMIPSAKVSINVKKENIMSVNVPKLEILQEESKNLYPYGFANTSAEMDAAIRTLATMLPKMLKLAELEKACQLMADEIEKTRRRVNALEYVLIPQLENTIKYITMKLDENERSSRTRLMKIKEMVMKG.

It belongs to the V-ATPase D subunit family.

Produces ATP from ADP in the presence of a proton gradient across the membrane. This is V-type ATP synthase subunit D from Thermoanaerobacter pseudethanolicus (strain ATCC 33223 / 39E) (Clostridium thermohydrosulfuricum).